Consider the following 172-residue polypeptide: Adenine phosphoribosyltransferase (172 aa).

This sequence belongs to the purine/pyrimidine phosphoribosyltransferase family. Homodimer.

It localises to the cytoplasm. It catalyses the reaction AMP + diphosphate = 5-phospho-alpha-D-ribose 1-diphosphate + adenine. The protein operates within purine metabolism; AMP biosynthesis via salvage pathway; AMP from adenine: step 1/1. Catalyzes a salvage reaction resulting in the formation of AMP, that is energically less costly than de novo synthesis. The polypeptide is Adenine phosphoribosyltransferase (Staphylococcus epidermidis (strain ATCC 35984 / DSM 28319 / BCRC 17069 / CCUG 31568 / BM 3577 / RP62A)).